Here is a 139-residue protein sequence, read N- to C-terminus: 6,7-dimethyl-8-ribityllumazine synthase (139 aa).

Residues Phe13, 45–47 (VFD), and 69–71 (AVI) contribute to the 5-amino-6-(D-ribitylamino)uracil site. Residue 74–75 (AT) participates in (2S)-2-hydroxy-3-oxobutyl phosphate binding. His77 functions as the Proton donor in the catalytic mechanism. Residue Leu102 participates in 5-amino-6-(D-ribitylamino)uracil binding. Arg117 is a (2S)-2-hydroxy-3-oxobutyl phosphate binding site.

The protein belongs to the DMRL synthase family.

It carries out the reaction (2S)-2-hydroxy-3-oxobutyl phosphate + 5-amino-6-(D-ribitylamino)uracil = 6,7-dimethyl-8-(1-D-ribityl)lumazine + phosphate + 2 H2O + H(+). Its pathway is cofactor biosynthesis; riboflavin biosynthesis; riboflavin from 2-hydroxy-3-oxobutyl phosphate and 5-amino-6-(D-ribitylamino)uracil: step 1/2. In terms of biological role, catalyzes the formation of 6,7-dimethyl-8-ribityllumazine by condensation of 5-amino-6-(D-ribitylamino)uracil with 3,4-dihydroxy-2-butanone 4-phosphate. This is the penultimate step in the biosynthesis of riboflavin. The polypeptide is 6,7-dimethyl-8-ribityllumazine synthase (Methanothermobacter thermautotrophicus (strain ATCC 29096 / DSM 1053 / JCM 10044 / NBRC 100330 / Delta H) (Methanobacterium thermoautotrophicum)).